A 311-amino-acid chain; its full sequence is 5'-adenylylsulfate reductase-like 3 (311 aa).

A signal peptide spans 1–22 (MATRLLCWTALLLPIIAATAAA). Residues 23–164 (SPLPEACPVP…LAAFYRDVSG (142 aa)) form the Thioredoxin domain. N-linked (GlcNAc...) asparagine glycosylation occurs at Asn-139. The chain crosses the membrane as a helical span at residues 210–230 (LALATAFVILRLLYLLFPKIG). N-linked (GlcNAc...) asparagine glycans are attached at residues Asn-281 and Asn-305.

It localises to the membrane. The sequence is that of 5'-adenylylsulfate reductase-like 3 (APRL3) from Oryza sativa subsp. japonica (Rice).